The following is a 229-amino-acid chain: Demethylmenaquinone methyltransferase (229 aa).

S-adenosyl-L-methionine is bound by residues Thr57, Asp77, and 101–102 (DV).

Belongs to the class I-like SAM-binding methyltransferase superfamily. MenG/UbiE family.

It catalyses the reaction a 2-demethylmenaquinol + S-adenosyl-L-methionine = a menaquinol + S-adenosyl-L-homocysteine + H(+). It functions in the pathway quinol/quinone metabolism; menaquinone biosynthesis; menaquinol from 1,4-dihydroxy-2-naphthoate: step 2/2. Functionally, methyltransferase required for the conversion of demethylmenaquinol (DMKH2) to menaquinol (MKH2). This is Demethylmenaquinone methyltransferase from Chlamydia muridarum (strain MoPn / Nigg).